A 412-amino-acid polypeptide reads, in one-letter code: Serine hydroxymethyltransferase (412 aa).

(6S)-5,6,7,8-tetrahydrofolate contacts are provided by residues leucine 117 and 121–123 (GHL). Lysine 226 carries the post-translational modification N6-(pyridoxal phosphate)lysine. 349–351 (SPF) provides a ligand contact to (6S)-5,6,7,8-tetrahydrofolate.

This sequence belongs to the SHMT family. In terms of assembly, homodimer. The cofactor is pyridoxal 5'-phosphate.

Its subcellular location is the cytoplasm. The enzyme catalyses (6R)-5,10-methylene-5,6,7,8-tetrahydrofolate + glycine + H2O = (6S)-5,6,7,8-tetrahydrofolate + L-serine. It participates in one-carbon metabolism; tetrahydrofolate interconversion. The protein operates within amino-acid biosynthesis; glycine biosynthesis; glycine from L-serine: step 1/1. In terms of biological role, catalyzes the reversible interconversion of serine and glycine with tetrahydrofolate (THF) serving as the one-carbon carrier. This reaction serves as the major source of one-carbon groups required for the biosynthesis of purines, thymidylate, methionine, and other important biomolecules. Also exhibits THF-independent aldolase activity toward beta-hydroxyamino acids, producing glycine and aldehydes, via a retro-aldol mechanism. This chain is Serine hydroxymethyltransferase, found in Halothermothrix orenii (strain H 168 / OCM 544 / DSM 9562).